The following is a 422-amino-acid chain: Glutamate-1-semialdehyde 2,1-aminomutase (422 aa).

The residue at position 264 (lysine 264) is an N6-(pyridoxal phosphate)lysine.

It belongs to the class-III pyridoxal-phosphate-dependent aminotransferase family. HemL subfamily. In terms of assembly, homodimer. It depends on pyridoxal 5'-phosphate as a cofactor.

It is found in the cytoplasm. It carries out the reaction (S)-4-amino-5-oxopentanoate = 5-aminolevulinate. It participates in porphyrin-containing compound metabolism; protoporphyrin-IX biosynthesis; 5-aminolevulinate from L-glutamyl-tRNA(Glu): step 2/2. The polypeptide is Glutamate-1-semialdehyde 2,1-aminomutase (Clostridium kluyveri (strain ATCC 8527 / DSM 555 / NBRC 12016 / NCIMB 10680 / K1)).